Here is a 1430-residue protein sequence, read N- to C-terminus: Death-associated protein kinase 1 (1430 aa).

The region spanning 13-275 (YDTGEELGSG…IQDSLQHPWI (263 aa)) is the Protein kinase domain. Residues 19-27 (LGSGQFAVV), K42, 94-96 (ELV), and E100 each bind ATP. D139 acts as the Proton acceptor in catalysis. Position 161 (D161) interacts with ATP. The interval 267 to 334 (QDSLQHPWIK…RSNMSVARSD (68 aa)) is calmodulin-binding. The residue at position 289 (S289) is a Phosphoserine; by RPS6KA1 and RPS6KA3. The autoinhibitory domain stretch occupies residues 292 to 301 (NMEKFKKFAA). The residue at position 308 (S308) is a Phosphoserine; by autocatalysis. A phosphoserine mark is found at S319 and S333. ANK repeat units lie at residues 378–407 (HGTPPLLIAAGCGNIQILQLLIKRGSRIDV), 411–440 (GGSNAVYWAARHGHVDTLKFLSENKCPLDV), 444–473 (SGEMALHVAARYGHADVAQLLCSFGSNPNI), 477–506 (EEETPLHCAAWHGYYSVAKALCEAGCNVNI), 510–539 (EGETPLLTASARGYHDIVECLAEHGADLNA), 543–572 (DGHIALHLAVRRCQMEVIKTLLSQGCFVDY), 576–605 (HGNTPLHVACKDGNMPIVVALCEANCNLDI), and 609–638 (YGRTPLHLAANNGILDVVRYLCLMGASVEA). Residues 681–955 (TQNLQPRIKL…NHLQEIRSQI (275 aa)) enclose the Roc domain. Position 734 is a phosphoserine; by MAPK1 (S734). An ANK 9 repeat occupies 875–904 (KLKNPLQVVLVATHADIMNVPRPAGGEFGY). Residue S1115 is modified to Phosphoserine. An ANK 10 repeat occupies 1162–1196 (EGDADIRLWVNGCKLANRGAELLVLLVNHGQGIEV). The Death domain occupies 1312–1396 (KLSRLLDPPD…DAADFLLKAS (85 aa)).

Belongs to the protein kinase superfamily. CAMK Ser/Thr protein kinase family. DAP kinase subfamily. As to quaternary structure, interacts with KLHL20. Interacts (via death domain) with MAPK1 and MAPK3. Interacts with MAP1B (via N-terminus). Interacts with PRKD1 in an oxidative stress-regulated manner. Interacts with PIN1, PDCD6, BECN1, TSC2 and STX1A. Interacts (via kinase domain) with DAPK3 (via kinase domain). Interacts with GRINB. Interacts (via death domain) with UNC5B (via death domain). Interacts with UNC5C (via death domain). Requires Mg(2+) as cofactor. Ubiquitinated by the BCR(KLHL20) E3 ubiquitin ligase complex, leading to its degradation by the proteasome. In terms of processing, removal of the C-terminal tail of isoform 2 (corresponding to amino acids 296-337 of isoform 2) by proteolytic cleavage stimulates maximally its membrane-blebbing function. Post-translationally, in response to mitogenic stimulation (PMA or EGF), phosphorylated at Ser-289; phosphorylation suppresses DAPK1 pro-apoptotic function. Autophosphorylation at Ser-308 inhibits its catalytic activity. Phosphorylation at Ser-734 by MAPK1 increases its catalytic activity and promotes cytoplasmic retention of MAPK1. Endoplasmic-stress can cause dephosphorylation at Ser-308. As to expression, isoform 2 is expressed in normal intestinal tissue as well as in colorectal carcinomas.

The protein localises to the cytoplasm. It localises to the cytoskeleton. It carries out the reaction L-seryl-[protein] + ATP = O-phospho-L-seryl-[protein] + ADP + H(+). The catalysed reaction is L-threonyl-[protein] + ATP = O-phospho-L-threonyl-[protein] + ADP + H(+). Its activity is regulated as follows. Activated by Ca(2+)/calmodulin. Regulated by a locking mechanism, involving autophosphorylation at Ser-308 and calmodulin binding. In the inactive state, Ser-308 is phosphorylated. Activation involves its dephosphorylation and a release-of-autoinhibition mechanism where binding of calmodulin induces a conformational change that relieves the steric block of the active site by the autoinhibitory domain. Activity is modulated by UNC5B and NTN1. UNC5B activates it by inhibiting the phosphorylation at Ser-308, whereas NTN1 inhibits UNC5B-mediated activation of DAPK1. Endoplasmic-stress activates by causing Ser-308 dephosphorylation. Its function is as follows. Calcium/calmodulin-dependent serine/threonine kinase involved in multiple cellular signaling pathways that trigger cell survival, apoptosis, and autophagy. Regulates both type I apoptotic and type II autophagic cell deaths signal, depending on the cellular setting. The former is caspase-dependent, while the latter is caspase-independent and is characterized by the accumulation of autophagic vesicles. Phosphorylates PIN1 resulting in inhibition of its catalytic activity, nuclear localization, and cellular function. Phosphorylates TPM1, enhancing stress fiber formation in endothelial cells. Phosphorylates STX1A and significantly decreases its binding to STXBP1. Phosphorylates PRKD1 and regulates JNK signaling by binding and activating PRKD1 under oxidative stress. Phosphorylates BECN1, reducing its interaction with BCL2 and BCL2L1 and promoting the induction of autophagy. Phosphorylates TSC2, disrupting the TSC1-TSC2 complex and stimulating mTORC1 activity in a growth factor-dependent pathway. Phosphorylates RPS6, MYL9 and DAPK3. Acts as a signaling amplifier of NMDA receptors at extrasynaptic sites for mediating brain damage in stroke. Cerebral ischemia recruits DAPK1 into the NMDA receptor complex and it phosphorylates GRINB at Ser-1303 inducing injurious Ca(2+) influx through NMDA receptor channels, resulting in an irreversible neuronal death. Required together with DAPK3 for phosphorylation of RPL13A upon interferon-gamma activation which is causing RPL13A involvement in transcript-selective translation inhibition. In terms of biological role, isoform 2 cannot induce apoptosis but can induce membrane blebbing. The protein is Death-associated protein kinase 1 (DAPK1) of Homo sapiens (Human).